A 328-amino-acid chain; its full sequence is Putative P2Y purinoceptor 10 (328 aa).

Over 1–27 the chain is Extracellular; the sequence is MGSNSTSSAESNCNATYLPFQYSLYAT. N-linked (GlcNAc...) asparagine glycans are attached at residues Asn4 and Asn14. Residues 28–48 form a helical membrane-spanning segment; that stretch reads TYIFIFIPGLLANSAALWVLC. Topologically, residues 49 to 56 are cytoplasmic; the sequence is RFISKKNK. The helical transmembrane segment at 57-77 threads the bilayer; the sequence is AIIFMINLSVADLAHILSLPL. Topologically, residues 78 to 91 are extracellular; the sequence is RIYYYINRHWPFQR. A helical transmembrane segment spans residues 92–112; it reads ALCLLCFYLKYLNMYASIFFL. A disulfide bridge links Cys94 with Cys170. Topologically, residues 113–137 are cytoplasmic; it reads TCISLQRCLFLLKPFRARNWKRRYD. Residues 138-158 form a helical membrane-spanning segment; the sequence is VGISAVIWIVVGTACLPFPIL. The Extracellular portion of the chain corresponds to 159–182; the sequence is RNAGLANSTDSCFADLGYKQMDAV. The helical transmembrane segment at 183 to 203 threads the bilayer; that stretch reads VLVTMVVIAELAGFVIPVITI. Topologically, residues 204 to 233 are cytoplasmic; it reads ACCTWKTTVSLKHPPIAFQGISERKKALRM. Residues 234–254 form a helical membrane-spanning segment; it reads VFMCAAVFVICFTPYHINFIF. Topologically, residues 255 to 277 are extracellular; it reads YTMVKESIITSCPTVKSTLYFHP. The chain crosses the membrane as a helical span at residues 278–298; that stretch reads FSLCLASLCCLLDPILYYFMA. Residues 299–328 are Cytoplasmic-facing; that stretch reads SEFRDQLSRHGSSVTRSRLMSRESGSSMVN.

This sequence belongs to the G-protein coupled receptor 1 family.

It localises to the cell membrane. Functionally, putative receptor for purines coupled to G-proteins. The chain is Putative P2Y purinoceptor 10 (P2ry10) from Mus musculus (Mouse).